The following is a 915-amino-acid chain: Probable inorganic carbon transporter subunit DabA (915 aa).

Zn(2+) contacts are provided by C392, D394, H566, and C581.

The protein belongs to the inorganic carbon transporter (TC 9.A.2) DabA family. As to quaternary structure, forms a complex with DabB. Zn(2+) is required as a cofactor.

The protein resides in the cell inner membrane. Its function is as follows. Part of an energy-coupled inorganic carbon pump. The polypeptide is Probable inorganic carbon transporter subunit DabA (Nitrosospira multiformis (strain ATCC 25196 / NCIMB 11849 / C 71)).